A 382-amino-acid polypeptide reads, in one-letter code: Galactokinase (382 aa).

Residue 34-37 (EHTD) participates in substrate binding. 124 to 130 (GAGLSSS) is a binding site for ATP. Mg(2+) is bound by residues Ser-130 and Glu-162. The active-site Proton acceptor is the Asp-174. Tyr-223 is a substrate binding site.

This sequence belongs to the GHMP kinase family. GalK subfamily.

It is found in the cytoplasm. It catalyses the reaction alpha-D-galactose + ATP = alpha-D-galactose 1-phosphate + ADP + H(+). It functions in the pathway carbohydrate metabolism; galactose metabolism. Functionally, catalyzes the transfer of the gamma-phosphate of ATP to D-galactose to form alpha-D-galactose-1-phosphate (Gal-1-P). This chain is Galactokinase, found in Salmonella agona (strain SL483).